The sequence spans 432 residues: Adenylosuccinate synthetase (432 aa).

Residues 13–19 (GDEGKGK) and 41–43 (GHT) each bind GTP. Catalysis depends on Asp14, which acts as the Proton acceptor. Mg(2+) contacts are provided by Asp14 and Gly41. IMP contacts are provided by residues 14–17 (DEGK), 39–42 (NAGH), Thr130, Arg144, Gln225, Thr240, and Arg304. His42 acts as the Proton donor in catalysis. Residue 300 to 306 (ATTGRSR) participates in substrate binding. GTP contacts are provided by residues Arg306, 332–334 (KLD), and 415–417 (STG).

The protein belongs to the adenylosuccinate synthetase family. As to quaternary structure, homodimer. It depends on Mg(2+) as a cofactor.

Its subcellular location is the cytoplasm. The catalysed reaction is IMP + L-aspartate + GTP = N(6)-(1,2-dicarboxyethyl)-AMP + GDP + phosphate + 2 H(+). It functions in the pathway purine metabolism; AMP biosynthesis via de novo pathway; AMP from IMP: step 1/2. Its function is as follows. Plays an important role in the de novo pathway of purine nucleotide biosynthesis. Catalyzes the first committed step in the biosynthesis of AMP from IMP. This is Adenylosuccinate synthetase from Proteus mirabilis (strain HI4320).